A 561-amino-acid polypeptide reads, in one-letter code: Carbohydrate sulfotransferase 15 (561 aa).

Residues 1–80 (MRHCINCCIQ…FLRFRKGKRC (80 aa)) are Cytoplasmic-facing. A helical; Signal-anchor for type II membrane protein membrane pass occupies residues 81-101 (SLVFGLIIMTLVMASYILSGA). Over 102–561 (HQELLISSPF…DDEAFAWKTT (460 aa)) the chain is Lumenal. Position 263 to 267 (263 to 267 (KCGTT)) interacts with 3'-phosphoadenylyl sulfate. Asn-364 carries an N-linked (GlcNAc...) asparagine glycan. Positions 392 and 400 each coordinate 3'-phosphoadenylyl sulfate.

Belongs to the sulfotransferase 1 family. Homodimer; disulfide-linked (Potential). The relevance of homodimerization is however unsure. May interact with phosphorylated proteins in resting B-cells, including HCK. It depends on a divalent metal cation as a cofactor. Glutathione is required as a cofactor. Post-translationally, glycosylated.

It is found in the golgi apparatus membrane. The enzyme catalyses dermatan 4'-sulfate + n 3'-phosphoadenylyl sulfate = dermatan 4',6'-bissulfate + n adenosine 3',5'-bisphosphate + n H(+). The catalysed reaction is chondroitin 4'-sulfate + n 3'-phosphoadenylyl sulfate = chondroitin 4',6'-bissulfate + n adenosine 3',5'-bisphosphate + n H(+). Inhibited by phenyl beta-GalNAc(4,6-SO(4)). In terms of biological role, sulfotransferase that transfers sulfate from 3'-phosphoadenosine 5'-phosphosulfate (PAPS) to the C-6 hydroxyl group of the GalNAc 4-sulfate residue of chondroitin sulfate A and forms chondroitin sulfate E containing GlcA-GalNAc(4,6-SO(4)) repeating units. It also transfers sulfate to a unique non-reducing terminal sequence, GalNAc(4SO4)-GlcA(2SO4)-GalNAc(6SO4), to yield a highly sulfated structure similar to the structure found in thrombomodulin chondroitin sulfate. May also act as a B-cell receptor involved in BCR ligation-mediated early activation that mediate regulatory signals key to B-cell development and/or regulation of B-cell-specific RAG expression; however such results are unclear in vivo. This Rattus norvegicus (Rat) protein is Carbohydrate sulfotransferase 15 (Chst15).